Here is a 330-residue protein sequence, read N- to C-terminus: D-cysteine desulfhydrase (330 aa).

Lys-52 bears the N6-(pyridoxal phosphate)lysine mark.

The protein belongs to the ACC deaminase/D-cysteine desulfhydrase family. Homodimer. Requires pyridoxal 5'-phosphate as cofactor.

The catalysed reaction is D-cysteine + H2O = hydrogen sulfide + pyruvate + NH4(+) + H(+). In terms of biological role, catalyzes the alpha,beta-elimination reaction of D-cysteine and of several D-cysteine derivatives. It could be a defense mechanism against D-cysteine. The protein is D-cysteine desulfhydrase of Serratia proteamaculans (strain 568).